Here is a 248-residue protein sequence, read N- to C-terminus: Probable transcriptional regulatory protein FTM_1203 (248 aa).

Belongs to the TACO1 family.

It localises to the cytoplasm. This Francisella tularensis subsp. mediasiatica (strain FSC147) protein is Probable transcriptional regulatory protein FTM_1203.